Consider the following 310-residue polypeptide: tRNA dimethylallyltransferase (310 aa).

Residue 13 to 20 coordinates ATP; that stretch reads GPTASGKT. 15–20 is a binding site for substrate; sequence TASGKT. Interaction with substrate tRNA regions lie at residues 38-41, 162-166, 243-248, and 276-283; these read DSAL, QRLSR, RCVGYR, and KRQITWLR.

Belongs to the IPP transferase family. In terms of assembly, monomer. It depends on Mg(2+) as a cofactor.

It carries out the reaction adenosine(37) in tRNA + dimethylallyl diphosphate = N(6)-dimethylallyladenosine(37) in tRNA + diphosphate. Its function is as follows. Catalyzes the transfer of a dimethylallyl group onto the adenine at position 37 in tRNAs that read codons beginning with uridine, leading to the formation of N6-(dimethylallyl)adenosine (i(6)A). In Vibrio atlanticus (strain LGP32) (Vibrio splendidus (strain Mel32)), this protein is tRNA dimethylallyltransferase.